Here is a 226-residue protein sequence, read N- to C-terminus: Small ribosomal subunit protein uS3 (226 aa).

A KH type-2 domain is found at Ile39–Thr109.

This sequence belongs to the universal ribosomal protein uS3 family. In terms of assembly, part of the 30S ribosomal subunit. Forms a tight complex with proteins S10 and S14.

In terms of biological role, binds the lower part of the 30S subunit head. Binds mRNA in the 70S ribosome, positioning it for translation. This is Small ribosomal subunit protein uS3 from Mycoplasmopsis synoviae (strain 53) (Mycoplasma synoviae).